The sequence spans 148 residues: Extracellular globin-2B (148 aa).

One can recognise a Globin domain in the interval 3 to 148 (CCSAADRHEV…IADVIKAELP (146 aa)). A disulfide bridge connects residues Cys-4 and Cys-135. Residue His-98 coordinates heme b.

Belongs to the globin family. As to quaternary structure, disulfide bonded trimer of chains IIA, IIB, and IIC.

Its subcellular location is the secreted. The sequence is that of Extracellular globin-2B from Tylorrhynchus heterochetus (Japanese palolo worm).